A 796-amino-acid chain; its full sequence is Protein tyrosine phosphatase domain-containing protein 1 (796 aa).

The 172-residue stretch at 126-297 folds into the Tyrosine-protein phosphatase domain; it reads YSSWVTDNIL…LIPLRNIFSC (172 aa). Cysteine 234 functions as the Phosphocysteine intermediate in the catalytic mechanism. Phosphoserine occurs at positions 435 and 437.

It belongs to the protein-tyrosine phosphatase family. Non-receptor class PTPDC1 subfamily.

May play roles in cilia formation and/or maintenance. This is Protein tyrosine phosphatase domain-containing protein 1 (PTPDC1) from Bos taurus (Bovine).